Consider the following 271-residue polypeptide: Probable ribosomal RNA small subunit methyltransferase A (271 aa).

S-adenosyl-L-methionine contacts are provided by Leu-12, Gly-37, Glu-58, Asp-83, and Asn-100.

This sequence belongs to the class I-like SAM-binding methyltransferase superfamily. rRNA adenine N(6)-methyltransferase family. RsmA subfamily.

It is found in the cytoplasm. Its function is as follows. Specifically dimethylates two adjacent adenosines in the loop of a conserved hairpin near the 3'-end of 16S rRNA in the 30S particle. May play a critical role in biogenesis of 30S subunits. The protein is Probable ribosomal RNA small subunit methyltransferase A of Methanococcus aeolicus (strain ATCC BAA-1280 / DSM 17508 / OCM 812 / Nankai-3).